The chain runs to 140 residues: Peptide methionine sulfoxide reductase MsrB (140 aa).

In terms of domain architecture, MsrB spans 9-131; it reads DALWREKLTP…NSASIVLDSE (123 aa). Zn(2+)-binding residues include C48, C51, C97, and C100. C120 serves as the catalytic Nucleophile.

It belongs to the MsrB Met sulfoxide reductase family. Zn(2+) is required as a cofactor.

The catalysed reaction is L-methionyl-[protein] + [thioredoxin]-disulfide + H2O = L-methionyl-(R)-S-oxide-[protein] + [thioredoxin]-dithiol. The protein is Peptide methionine sulfoxide reductase MsrB of Cellvibrio japonicus (strain Ueda107) (Pseudomonas fluorescens subsp. cellulosa).